The primary structure comprises 100 residues: MSFAQFFVACCLAIVLLAVSNTRAAVQGPPLCQSGIVEEMPPHIRKVCQALENSDQLTSALKSYINNEASALVANSDDLLKNYNKRTDVDHVFLRFGKRR.

A signal peptide spans 1–24 (MSFAQFFVACCLAIVLLAVSNTRA). Residues 25 to 84 (AVQGPPLCQSGIVEEMPPHIRKVCQALENSDQLTSALKSYINNEASALVANSDDLLKNYN) constitute a propeptide that is removed on maturation. Position 96 is a phenylalanine amide (Phe-96).

Belongs to the myosuppressin family.

It localises to the secreted. Myoinhibiting neuropeptide. This is Dromyosuppressin from Drosophila melanogaster (Fruit fly).